We begin with the raw amino-acid sequence, 161 residues long: MKGEPKVIERLNDALFLELGAVNQYWLHYRLLNDWGYTRLAKKEREESIEEMHHADKLINRIIFFEGFPNLQTVSPLRIGQNVKEVLEADLKGEYDARASYKESREICDKLGDYVSKQLFDELLADEEGHIDFLETQLDLLAKIGEERYGQLNAAPADEAE.

Positions M1–G145 constitute a Ferritin-like diiron domain. Positions 18 and 51 each coordinate Fe cation. Residue M52 participates in heme b binding. Residues H54, E94, E127, and H130 each contribute to the Fe cation site.

This sequence belongs to the bacterioferritin family. As to quaternary structure, homooligomer of 24 subunits, arranged as 12 dimers, that are packed together to form an approximately spherical molecule with a central cavity, in which large amounts of iron can be deposited. Requires heme b as cofactor.

It catalyses the reaction 4 Fe(2+) + O2 + 4 H(+) = 4 Fe(3+) + 2 H2O. It carries out the reaction Fe(2+)(in) = Fe(2+)(out). Functionally, iron-storage protein, whose ferroxidase center binds Fe(2+), oxidizes it using dioxygen to Fe(3+), and participates in the subsequent Fe(3+) oxide mineral core formation within the central cavity of the BFR protein shell. This Brucella melitensis biotype 1 (strain ATCC 23456 / CCUG 17765 / NCTC 10094 / 16M) protein is Bacterioferritin (bfr).